Consider the following 390-residue polypeptide: Protein TAB2 homolog, chloroplastic (390 aa).

The transit peptide at 1–69 directs the protein to the chloroplast; it reads MTTATAIVAG…RSISSESSTE (69 aa). Positions 16–85 are disordered; that stretch reads RRSLPLPNPP…IADEEVEAEN (70 aa). Residues 61 to 75 show a composition bias toward low complexity; the sequence is SISSESSTEASAAAD.

It is found in the plastid. It localises to the chloroplast. In terms of biological role, nuclear genome-encoded factor involved in the biogenesis of photosystem I (PSI). Required for the accumulation of PSI during plant development. Does not seem to be required for the translation of mRNAs of the PSI subunits. This chain is Protein TAB2 homolog, chloroplastic, found in Zea mays (Maize).